A 199-amino-acid chain; its full sequence is Imidazole glycerol phosphate synthase subunit HisH 2 (199 aa).

The region spanning 1–199 (MIAVIDVSGN…NNFLSLESKC (199 aa)) is the Glutamine amidotransferase type-1 domain. The Nucleophile role is filled by Cys-76. Catalysis depends on residues His-177 and Glu-179.

As to quaternary structure, heterodimer of HisH and HisF.

It is found in the cytoplasm. It carries out the reaction 5-[(5-phospho-1-deoxy-D-ribulos-1-ylimino)methylamino]-1-(5-phospho-beta-D-ribosyl)imidazole-4-carboxamide + L-glutamine = D-erythro-1-(imidazol-4-yl)glycerol 3-phosphate + 5-amino-1-(5-phospho-beta-D-ribosyl)imidazole-4-carboxamide + L-glutamate + H(+). The enzyme catalyses L-glutamine + H2O = L-glutamate + NH4(+). The protein operates within amino-acid biosynthesis; L-histidine biosynthesis; L-histidine from 5-phospho-alpha-D-ribose 1-diphosphate: step 5/9. Its function is as follows. IGPS catalyzes the conversion of PRFAR and glutamine to IGP, AICAR and glutamate. The HisH subunit provides the glutamine amidotransferase activity that produces the ammonia necessary to HisF for the synthesis of IGP and AICAR. The chain is Imidazole glycerol phosphate synthase subunit HisH 2 from Legionella pneumophila (strain Lens).